A 752-amino-acid chain; its full sequence is Neuroendocrine convertase 1 (752 aa).

The N-terminal stretch at 1-27 is a signal peptide; the sequence is MKQRGWTLQCTAFTLFCVWCALNSVKA. The propeptide occupies 28-110; it reads KRQFVNEWAA…QQYEKERRKR (83 aa). Residues 129 to 450 enclose the Peptidase S8 domain; it reads QWYLQDTRMT…FGLLNAKALV (322 aa). D167 (charge relay system) is an active-site residue. An N-linked (GlcNAc...) asparagine glycan is attached at N173. H208 serves as the catalytic Charge relay system. 2 disulfide bridges follow: C225–C374 and C317–C347. S382 functions as the Charge relay system in the catalytic mechanism. A glycan (N-linked (GlcNAc...) asparagine) is linked at N401. The P/Homo B domain occupies 460-597; it reads NVPEKKECII…KLILHGTSSQ (138 aa). A disulfide bond links C467 and C494. Residues 631 to 662 are disordered; it reads PTQNSLNGNLLVPKNSSSSSVEDRRDEQVQGA. Residue N645 is glycosylated (N-linked (GlcNAc...) asparagine).

Belongs to the peptidase S8 family. Furin subfamily. It depends on Ca(2+) as a cofactor.

It is found in the cytoplasmic vesicle. The protein resides in the secretory vesicle. It carries out the reaction Release of protein hormones, neuropeptides and renin from their precursors, generally by hydrolysis of -Lys-Arg-|- bonds.. Functionally, involved in the processing of hormone and other protein precursors at sites comprised of pairs of basic amino acid residues. Substrates include POMC, renin, enkephalin, dynorphin, somatostatin, insulin and AGRP. In Rattus norvegicus (Rat), this protein is Neuroendocrine convertase 1 (Pcsk1).